The sequence spans 433 residues: Probable phosphoglucosamine mutase (433 aa).

The Phosphoserine intermediate role is filled by Ser-91. Residues Ser-91, Asp-229, Asp-231, and Asp-233 each contribute to the Mg(2+) site. A Phosphoserine modification is found at Ser-91.

Belongs to the phosphohexose mutase family. The cofactor is Mg(2+). In terms of processing, activated by phosphorylation.

The catalysed reaction is alpha-D-glucosamine 1-phosphate = D-glucosamine 6-phosphate. Functionally, catalyzes the conversion of glucosamine-6-phosphate to glucosamine-1-phosphate. The sequence is that of Probable phosphoglucosamine mutase from Methanococcoides burtonii (strain DSM 6242 / NBRC 107633 / OCM 468 / ACE-M).